The sequence spans 406 residues: Argininosuccinate synthase (406 aa).

ATP contacts are provided by residues 10 to 18 and A37; that span reads AYSGGLDTS. Residues Y88 and S93 each coordinate L-citrulline. G118 provides a ligand contact to ATP. Residues T120, N124, and D125 each contribute to the L-aspartate site. N124 is an L-citrulline binding site. L-citrulline-binding residues include R128, S180, S189, E265, and Y277.

Belongs to the argininosuccinate synthase family. Type 1 subfamily. As to quaternary structure, homotetramer.

The protein localises to the cytoplasm. The catalysed reaction is L-citrulline + L-aspartate + ATP = 2-(N(omega)-L-arginino)succinate + AMP + diphosphate + H(+). The protein operates within amino-acid biosynthesis; L-arginine biosynthesis; L-arginine from L-ornithine and carbamoyl phosphate: step 2/3. The polypeptide is Argininosuccinate synthase (Methylobacillus flagellatus (strain ATCC 51484 / DSM 6875 / VKM B-1610 / KT)).